The primary structure comprises 555 residues: Probable apyrase 6 (555 aa).

The segment covering 1-10 (MRRSHARSRV) has biased composition (basic residues). The segment at 1-45 (MRRSHARSRVKNSSSSKSDMDPIKFQIRSGNRAPSSSSTYTLTKP) is disordered. Topologically, residues 1-55 (MRRSHARSRVKNSSSSKSDMDPIKFQIRSGNRAPSSSSTYTLTKPNSKHAKSNLL) are cytoplasmic. Polar residues predominate over residues 28-45 (RSGNRAPSSSSTYTLTKP). A helical transmembrane segment spans residues 56-76 (LTVGSISVVLGVLFLCYSILF). Residues 77–512 (SGGNLRGSLR…HALFSNHPKT (436 aa)) are Extracellular-facing. 89–99 (VVIDGGSTGTR) serves as a coordination point for ATP. Glutamate 212 serves as the catalytic Proton acceptor. 236–246 (GIVELGGASAQ) provides a ligand contact to ATP. Residues asparagine 267 and asparagine 348 are each glycosylated (N-linked (GlcNAc...) asparagine). A helical transmembrane segment spans residues 513–533 (LHYLIGIPILMTVLVYLVTKW). Topologically, residues 534-555 (RKPQLKTIYDLEKGRYIVTRIR) are cytoplasmic.

It belongs to the GDA1/CD39 NTPase family. Requires Ca(2+) as cofactor. In terms of tissue distribution, detected in mature pollen grains (at the protein level). Also expressed in the veins and hydathode regions of rosette leaves.

The protein resides in the cytoplasmic vesicle membrane. The enzyme catalyses a ribonucleoside 5'-triphosphate + 2 H2O = a ribonucleoside 5'-phosphate + 2 phosphate + 2 H(+). Its function is as follows. Catalyzes the hydrolysis of phosphoanhydride bonds of nucleoside tri- and di-phosphates. Involved in the regulation of pollen and anther development. This chain is Probable apyrase 6 (APY6), found in Arabidopsis thaliana (Mouse-ear cress).